A 326-amino-acid chain; its full sequence is GDP-mannose transporter (326 aa).

The Cytoplasmic segment spans residues 1–4 (MEKS). The chain crosses the membrane as a helical span at residues 5–25 (ITNSPVLSILSYCAASILMTV). Topologically, residues 26-35 (TNKYVLSGTS) are lumenal. The helical transmembrane segment at 36–56 (FNLNLALLAVQSIVCLTAISI) threads the bilayer. Topologically, residues 57-74 (GKSFGLCKFRSFNADEAK) are cytoplasmic. The chain crosses the membrane as a helical span at residues 75–97 (KWFPIALLLVVMIYTSSKALQFL). The Lumenal segment spans residues 98 to 100 (SIP). Residues 101–123 (VYTIFKNLTIILIAYGEVLWFGG) traverse the membrane as a helical segment. At 124–129 (SVTSMA) the chain is on the cytoplasmic side. The helical transmembrane segment at 130-152 (LASFVLMVLSSVIAAWSDISGAI) threads the bilayer. The Lumenal portion of the chain corresponds to 153–163 (AVSGSATTTVT). Residues 164–184 (ALNIGYFWMMSNCFASAAFVL) form a helical membrane-spanning segment. Topologically, residues 185 to 208 (YMRKRIKLTNFGDFDTTFYNNLLS) are cytoplasmic. Residues 209–229 (IPVLLIASLLFEDWSPANLAV) form a helical membrane-spanning segment. At 230 to 237 (NFPPESRN) the chain is on the lumenal side. Residues 238–258 (LIFFSMVVSGLMSIGISYCSA) form a helical membrane-spanning segment. Topologically, residues 259–268 (WCVRVTSSTT) are cytoplasmic. Residues 269-289 (YSMVGALNKLPLALSGIVFFG) traverse the membrane as a helical segment. Residues 290–291 (TP) are Lumenal-facing. Residues 292–312 (ATFSSVSAIFVGFVAGIVYAV) traverse the membrane as a helical segment. At 313 to 326 (AQIQKKKAEAALPK) the chain is on the cytoplasmic side.

The protein belongs to the TPT transporter family. SLC35D subfamily. In terms of assembly, homooligomer.

It is found in the golgi apparatus membrane. The protein resides in the cytoplasmic vesicle membrane. The protein localises to the endoplasmic reticulum membrane. Its function is as follows. Involved in the import of GDP-mannose from the cytoplasm into the Golgi lumen. In Yarrowia lipolytica (strain CLIB 122 / E 150) (Yeast), this protein is GDP-mannose transporter (VRG4).